The chain runs to 400 residues: Forkhead box protein A4-B (400 aa).

Positions 119-213 (KPPYSYISLI…ENGCYLRRQK (95 aa)) form a DNA-binding region, fork-head. Residues 218–234 (ERSKSGEGERKGNKPGD) show a composition bias toward basic and acidic residues. The tract at residues 218–290 (ERSKSGEGER…VGFSPTSEQA (73 aa)) is disordered. Composition is skewed to polar residues over residues 249-258 (DCSSSRSPQA) and 267-277 (STGSSIHQATG).

Primarily expressed in the dorsal blastopore lip (Spemann organizer) of early gastrulae. At later stages, expressed in the dorsal mesoderm and the neural floor plate. In the dorsal mesoderm, expressed in the notochord but not in the presomitic mesoderm. Also expressed in the mid-brain area.

The protein resides in the nucleus. Its function is as follows. Transcriptional repressor involved in embryonic nervous system development. Plays a role in the induction and patterning of the anterior-posterior neural axis. Involved in the establishment of floor plate differentiation from neural plate cells during gastrulation. Binds the anf1 promoter sequence to restrict expression of anf1 to the anterior of the neural plate, thereby patterning the forebrain. Can bind to the HNF-3-alpha DNA target sequence. Cooperates with t/bra in a dose-dependent manner to specify dorsal mesoderm formation, including notochord. May be involved in the dorso-ventral patterning of the mesoderm. Binds to DNA via the target sequence 5'-[GA]TAAA[TC]A-3', with 5'-GTAAATA-3' being the preferred binding site. This chain is Forkhead box protein A4-B (foxa4-b), found in Xenopus laevis (African clawed frog).